Here is a 336-residue protein sequence, read N- to C-terminus: Aspartate carbamoyltransferase catalytic subunit (336 aa).

Carbamoyl phosphate contacts are provided by Arg72 and Thr73. Lys100 contacts L-aspartate. 3 residues coordinate carbamoyl phosphate: Arg122, His155, and Gln158. L-aspartate contacts are provided by Arg188 and Arg242. Gly288 and Pro289 together coordinate carbamoyl phosphate.

It belongs to the aspartate/ornithine carbamoyltransferase superfamily. ATCase family. As to quaternary structure, heterododecamer (2C3:3R2) of six catalytic PyrB chains organized as two trimers (C3), and six regulatory PyrI chains organized as three dimers (R2).

It carries out the reaction carbamoyl phosphate + L-aspartate = N-carbamoyl-L-aspartate + phosphate + H(+). It functions in the pathway pyrimidine metabolism; UMP biosynthesis via de novo pathway; (S)-dihydroorotate from bicarbonate: step 2/3. In terms of biological role, catalyzes the condensation of carbamoyl phosphate and aspartate to form carbamoyl aspartate and inorganic phosphate, the committed step in the de novo pyrimidine nucleotide biosynthesis pathway. The chain is Aspartate carbamoyltransferase catalytic subunit from Lactobacillus leichmannii.